Consider the following 169-residue polypeptide: Nicotinamide-nucleotide adenylyltransferase (169 aa).

This sequence belongs to the archaeal NMN adenylyltransferase family.

Its subcellular location is the cytoplasm. It catalyses the reaction beta-nicotinamide D-ribonucleotide + ATP + H(+) = diphosphate + NAD(+). It functions in the pathway cofactor biosynthesis; NAD(+) biosynthesis; NAD(+) from nicotinamide D-ribonucleotide: step 1/1. This is Nicotinamide-nucleotide adenylyltransferase from Picrophilus torridus (strain ATCC 700027 / DSM 9790 / JCM 10055 / NBRC 100828 / KAW 2/3).